Here is a 404-residue protein sequence, read N- to C-terminus: GTPase Obg (404 aa).

In terms of domain architecture, Obg spans 1–159 (MKFIDEARIE…RALRLELKVL (159 aa)). The disordered stretch occupies residues 22–43 (SFRREKFIPRGGPDGGDGGRGG). A compositionally biased stretch (gly residues) spans 33–43 (GPDGGDGGRGG). One can recognise an OBG-type G domain in the interval 160-334 (ADVGLLGMPN…LVFAIQDFLD (175 aa)). GTP-binding positions include 166-173 (GMPNAGKS), 191-195 (FTTLA), 213-216 (DIPG), 284-287 (NKLD), and 315-317 (SAL). Ser173 and Thr193 together coordinate Mg(2+). The interval 373–404 (LLAEGETGTGDDGRDGNENDPADEQDTNRPNH) is disordered.

Belongs to the TRAFAC class OBG-HflX-like GTPase superfamily. OBG GTPase family. As to quaternary structure, monomer. Mg(2+) is required as a cofactor.

The protein resides in the cytoplasm. Its function is as follows. An essential GTPase which binds GTP, GDP and possibly (p)ppGpp with moderate affinity, with high nucleotide exchange rates and a fairly low GTP hydrolysis rate. Plays a role in control of the cell cycle, stress response, ribosome biogenesis and in those bacteria that undergo differentiation, in morphogenesis control. The chain is GTPase Obg from Aromatoleum aromaticum (strain DSM 19018 / LMG 30748 / EbN1) (Azoarcus sp. (strain EbN1)).